The chain runs to 456 residues: Transcription factor bHLH62 (456 aa).

Positions 159-185 (RTNSPFPINNEPPITTNEKMPRVSSSP) are enriched in polar residues. Positions 159–254 (RTNSPFPINN…KTKSIDPYKD (96 aa)) are disordered. Residues 223–254 (KEIEEKEDSDPKRCKKSEENGDKTKSIDPYKD) are compositionally biased toward basic and acidic residues. The region spanning 264-314 (QATDSHSLAERVRREKISERMKLLQDLVPGCNKVTGKALMLDEIINYVQSL) is the bHLH domain.

As to quaternary structure, homodimer. As to expression, expressed constitutively in roots, leaves, stems, and flowers.

The protein resides in the nucleus. The sequence is that of Transcription factor bHLH62 (BHLH62) from Arabidopsis thaliana (Mouse-ear cress).